A 492-amino-acid polypeptide reads, in one-letter code: MWRGLSALVTRPASAPLRLCARCSTGAESLVPGSTIFALSSGQGRCAIAVIRTSGPASGLALRSLTALREPPPARSACLRLLRHPCSGEPLDRSLVLWFPGPQSFTGEDCMELHVHGGPAVVSGVLQALGSVPGLRPAKAGEFTRRAFAHGKLSLTEVEGLADLIHAETEAQRRQALRQLDGELSQLCQGWAKTLTKALAHVEAYIDFGEDDNLEEGVLEQVDRDVRALEVALSSHLRDARRGQRLRSGANVVVAGPPNAGKSSLVNLLSQKPVSIVSPEPGTTRDILETPVDLAGFPVLLSDTAGLREGAGAVEQEGVRRARQRLEQADIILGMLDASDLASSSSCSFLDTVVAPLVAQSHDSGRQRLLLLLNKSDLLSANAPASSTALPPHLLLSCHTGAGMDALLQALKTELAAVCGDPSTGPPLLTRARHQYHLQGCLDALGRFQLTTDLALAAEALRQARRQLSHLTGGGGTEEILDLIFQDFCVGK.

A mitochondrion-targeting transit peptide spans methionine 1–cysteine 20. Positions 52, 112, and 152 each coordinate 5,10-methylenetetrahydrofolate. In terms of domain architecture, TrmE-type G spans glycine 249–alanine 416. GTP is bound by residues glycine 256 to serine 263, glycine 282 to aspartate 286, aspartate 303 to glycine 306, and asparagine 374 to aspartate 377. A K(+)-binding site is contributed by asparagine 259. The Mg(2+) site is built by serine 263 and threonine 284. Position 492 (lysine 492) interacts with 5,10-methylenetetrahydrofolate.

This sequence belongs to the TRAFAC class TrmE-Era-EngA-EngB-Septin-like GTPase superfamily. TrmE GTPase family. Homodimer; forms a dimer in the presence of potassium. Interacts with MTO1; forms the GTPBP3-MTO1 complex composed of homodimers of GTPBP3 and MTO1. It depends on K(+) as a cofactor.

The protein resides in the mitochondrion. It catalyses the reaction GTP + H2O = GDP + phosphate + H(+). GTPase component of the GTPBP3-MTO1 complex that catalyzes the 5-taurinomethyluridine (taum(5)U) modification at the 34th wobble position (U34) of mitochondrial tRNAs (mt-tRNAs), which plays a role in mt-tRNA decoding and mitochondrial translation. Taum(5)U formation on mammalian mt-tRNA requires the presence of both GTPBP3-mediated GTPase activity and MTO1 catalytic activity. The polypeptide is 5-taurinomethyluridine-[tRNA] synthase subunit GTPB3, mitochondrial (Rattus norvegicus (Rat)).